A 61-amino-acid chain; its full sequence is Probable tautomerase SSP1389 (61 aa).

The active-site Proton acceptor; via imino nitrogen is Pro-2.

The protein belongs to the 4-oxalocrotonate tautomerase family.

The polypeptide is Probable tautomerase SSP1389 (Staphylococcus saprophyticus subsp. saprophyticus (strain ATCC 15305 / DSM 20229 / NCIMB 8711 / NCTC 7292 / S-41)).